Reading from the N-terminus, the 782-residue chain is Anoctamin-9 (782 aa).

Topologically, residues 1-198 (MQGEESLRIL…LYFVWLGWYT (198 aa)) are cytoplasmic. Residues 199 to 219 (YMLVPAALTGLLVFLSGFSLF) form a helical membrane-spanning segment. Residues 220–264 (EASQISKEICEAHDILMCPLGDHSRRYQRLSETCTFAKLTHLFDN) lie on the Extracellular side of the membrane. A Phosphoserine; by PKA modification is found at Ser-250. Residues 265 to 285 (DGTVVFAIFMALWATVFLEIW) traverse the membrane as a helical segment. Over 286–331 (KRQRARVVLHWDLYVWDEEQEEMALQLINCPDYKLRPYQHSYLRST) the chain is Cytoplasmic. A helical transmembrane segment spans residues 332-352 (VILVLTLLMICLMIGMAHVLV). The Extracellular segment spans residues 353–373 (VYRVLASALFSSSAVPFLEEQ). Residues 374–394 (VTTAVVVTGALVHYVTIIIMT) form a helical membrane-spanning segment. Over 395–423 (KINRCVALKLCDFEMPRTFSERESRFTIR) the chain is Cytoplasmic. Residues 424–444 (FFTLQFFTHFSSLIYIAFILG) form a helical membrane-spanning segment. The Extracellular portion of the chain corresponds to 445 to 552 (RINGHPGKST…EMMIQYGFTT (108 aa)). A helical transmembrane segment spans residues 553-573 (IFVAAFPLAPLLALFSNLVEI). Topologically, residues 574–604 (RLDAIKMVWLQRRLVPRKAKDIGTWLQVLET) are cytoplasmic. A helical membrane pass occupies residues 605–625 (IGVLAVIANGMVIAFTSEFIP). The Extracellular portion of the chain corresponds to 626–703 (RVVYKYRYSP…QFWFLLAIRL (78 aa)). Residues Asn-641, Asn-652, Asn-674, and Asn-690 are each glycosylated (N-linked (GlcNAc...) asparagine). A helical transmembrane segment spans residues 704-724 (AFVILFEHVALCIKLIAAWFV). Topologically, residues 725–782 (PDIPQSVKNKVLEVKYQRLREKMWHGRQRLGGVGAGSRPPMPAHPTPASIFSARSTDV) are cytoplasmic. Positions 756-782 (GVGAGSRPPMPAHPTPASIFSARSTDV) are disordered.

Belongs to the anoctamin family. In terms of processing, phosphorylated on serine residues by cAMP-dependent protein kinase A (PKA) which is essential for activation of its cation channel activity. Expressed in the kidney. Expressed in the olfactory epithelium.

Its subcellular location is the cell membrane. The protein localises to the endoplasmic reticulum. It catalyses the reaction a 1,2-diacyl-sn-glycero-3-phospho-L-serine(in) = a 1,2-diacyl-sn-glycero-3-phospho-L-serine(out). The enzyme catalyses a beta-D-galactosyl-(1&lt;-&gt;1')-N-acylsphing-4-enine(out) = a beta-D-galactosyl-(1&lt;-&gt;1')-N-acylsphing-4-enine(in). It carries out the reaction a 1,2-diacyl-sn-glycero-3-phosphocholine(in) = a 1,2-diacyl-sn-glycero-3-phosphocholine(out). The catalysed reaction is Ca(2+)(in) = Ca(2+)(out). It catalyses the reaction Na(+)(in) = Na(+)(out). The enzyme catalyses K(+)(in) = K(+)(out). Cation channel activity is activated via phosphorylation on serine residues by cAMP-dependent protein kinase A (PKA). Functionally, PKA-activated nonselective cation channel. Discriminates poorly among cations but is more permeable to Ca(2+) ions than to monovalent cations. Acts as a calcium-activated calcium permeable channel which may operate as a endoplasmic reticulum (ER) Ca(2+)-leak channel, reducing the loading of the ER Ca(2+) store. Regulates intracellular Ca2+ signals, ion channel activity, and cytokine release in the renal tissue. Plays an important role in olfaction, amplifying cAMP-evoked cyclic nucleotide-gated (CNG) channel currents in the olfactory sensory neurons. Has calcium-dependent phospholipid scramblase activity; scrambles phosphatidylserine, phosphatidylcholine and galactosylceramide. Does not exhibit calcium-activated chloride channel (CaCC) activity. Can inhibit the activity of ANO1. The chain is Anoctamin-9 (ANO9) from Homo sapiens (Human).